Consider the following 662-residue polypeptide: Probable quinol oxidase subunit 1 (662 aa).

Transmembrane regions (helical) follow at residues 14-34 and 56-76; these read WMIISAQIAAPFLVIGLIAVI and IGIMYLISAVLMFVRGGIDAL. H102 serves as a coordination point for Fe(II)-heme a. Helical transmembrane passes span 103 to 123, 140 to 160, 187 to 207, 228 to 248, 273 to 293, 311 to 331, 336 to 356, and 376 to 396; these read GVIMIIFMAMPFIFGLWNVVI, VSFWLFFAGMILFNLSFIVGG, IAIQISGIGSLMTGINFFVTI, FITTLIVILAFPVFTVALALM, FFWVWGHPEVYIVILPAFGMY, MIWATAGIAFLSFLVWVHHFF, GALINSFFSISTMLIGVPTGV, and MLFSLAFIPNFLLGGVTGVML. Cu cation-binding residues include H279, Y283, H328, and H329. The segment at residues 279 to 283 is a cross-link (1'-histidyl-3'-tyrosine (His-Tyr)); the sequence is HPEVY. H414 lines the heme a3 pocket. 5 consecutive transmembrane segments (helical) span residues 415 to 435, 451 to 471, 492 to 512, 587 to 604, and 608 to 627; these read FHYTLVTGVVFACLAGLIFWY, CFWFFMIGFNVCFLPQFILGL, FISTIGAVLMAIGFLFLVASI, PVGFWMGIFMTIGGFFLI, and IVPALICLAGIFITMIWRSF. Fe(II)-heme a is bound at residue H416.

The protein belongs to the heme-copper respiratory oxidase family. The cofactor is Cu cation. Ferriheme a serves as cofactor. It depends on Heme A3. as a cofactor.

The protein resides in the cell membrane. It catalyses the reaction 2 a quinol + O2 = 2 a quinone + 2 H2O. It functions in the pathway energy metabolism; oxidative phosphorylation. In terms of biological role, catalyzes quinol oxidation with the concomitant reduction of oxygen to water. This Staphylococcus epidermidis (strain ATCC 35984 / DSM 28319 / BCRC 17069 / CCUG 31568 / BM 3577 / RP62A) protein is Probable quinol oxidase subunit 1 (qoxB).